Consider the following 533-residue polypeptide: NADH-quinone oxidoreductase subunit N (533 aa).

The next 14 helical transmembrane spans lie at 13-33 (VWPL…EGFV), 40-60 (LVQA…TILV), 87-107 (PALF…LLFA), 141-161 (HTEV…FAAA), 164-184 (LLTL…LSGL), 200-220 (FMLG…VYGF), 243-263 (LLIG…AVPF), 275-295 (PTAV…GAML), 310-330 (QPML…IAIV), 337-357 (MLAY…LGVQ), 373-393 (VLFY…VVTL), 417-437 (VAGV…TAGF), 451-471 (GAWP…FFYV), and 502-522 (ATIF…GPVL).

It belongs to the complex I subunit 2 family. NDH-1 is composed of 14 different subunits. Subunits NuoA, H, J, K, L, M, N constitute the membrane sector of the complex.

It is found in the cell membrane. It carries out the reaction a quinone + NADH + 5 H(+)(in) = a quinol + NAD(+) + 4 H(+)(out). In terms of biological role, NDH-1 shuttles electrons from NADH, via FMN and iron-sulfur (Fe-S) centers, to quinones in the respiratory chain. The immediate electron acceptor for the enzyme in this species is believed to be a menaquinone. Couples the redox reaction to proton translocation (for every two electrons transferred, four hydrogen ions are translocated across the cytoplasmic membrane), and thus conserves the redox energy in a proton gradient. The polypeptide is NADH-quinone oxidoreductase subunit N (Nocardioides sp. (strain ATCC BAA-499 / JS614)).